The sequence spans 491 residues: Nicotinamide phosphoribosyltransferase (491 aa).

At M1 the chain carries N-acetylmethionine. At Y188 the chain carries Phosphotyrosine. Residue R196 participates in diphosphate binding. D219 is a binding site for beta-nicotinamide D-ribonucleotide. Residues H247 and R311 each coordinate diphosphate. Beta-nicotinamide D-ribonucleotide is bound by residues 311-313, 353-354, G384, and R392; these read RPD and GD. The residue at position 472 (S472) is a Phosphoserine.

It belongs to the NAPRTase family. As to quaternary structure, homodimer.

Its subcellular location is the nucleus. The protein localises to the cytoplasm. It is found in the secreted. It catalyses the reaction beta-nicotinamide D-ribonucleotide + diphosphate = 5-phospho-alpha-D-ribose 1-diphosphate + nicotinamide + H(+). Its pathway is cofactor biosynthesis; NAD(+) biosynthesis; nicotinamide D-ribonucleotide from 5-phospho-alpha-D-ribose 1-diphosphate and nicotinamide: step 1/1. Its function is as follows. Catalyzes the condensation of nicotinamide with 5-phosphoribosyl-1-pyrophosphate to yield nicotinamide mononucleotide, an intermediate in the biosynthesis of NAD. It is the rate limiting component in the mammalian NAD biosynthesis pathway. The secreted form behaves both as a cytokine with immunomodulating properties and an adipokine with anti-diabetic properties, it has no enzymatic activity, partly because of lack of activation by ATP, which has a low level in extracellular space and plasma. Plays a role in the modulation of circadian clock function. Plays a role in the modulation of circadian clock function. NAMPT-dependent oscillatory production of NAD regulates oscillation of clock target gene expression by releasing the core clock component: CLOCK-BMAL1 heterodimer from NAD-dependent SIRT1-mediated suppression. This is Nicotinamide phosphoribosyltransferase (NAMPT) from Sus scrofa (Pig).